The following is a 361-amino-acid chain: Chorismate synthase (361 aa).

Arg-48 and Arg-54 together coordinate NADP(+). FMN-binding positions include 131-133 (RSS), 243-244 (NA), Gly-287, 302-306 (KPTSS), and Arg-328.

This sequence belongs to the chorismate synthase family. As to quaternary structure, homotetramer. The cofactor is FMNH2.

The enzyme catalyses 5-O-(1-carboxyvinyl)-3-phosphoshikimate = chorismate + phosphate. It participates in metabolic intermediate biosynthesis; chorismate biosynthesis; chorismate from D-erythrose 4-phosphate and phosphoenolpyruvate: step 7/7. Catalyzes the anti-1,4-elimination of the C-3 phosphate and the C-6 proR hydrogen from 5-enolpyruvylshikimate-3-phosphate (EPSP) to yield chorismate, which is the branch point compound that serves as the starting substrate for the three terminal pathways of aromatic amino acid biosynthesis. This reaction introduces a second double bond into the aromatic ring system. This Bradyrhizobium sp. (strain BTAi1 / ATCC BAA-1182) protein is Chorismate synthase.